Reading from the N-terminus, the 703-residue chain is Elongation factor G (703 aa).

A tr-type G domain is found at 7 to 287; the sequence is KFTRNIGIAA…AVMRYLPSPA (281 aa). Residues 16 to 23, 84 to 88, and 138 to 141 each bind GTP; these read AHIDAGKT, DTPGH, and NKMD.

Belongs to the TRAFAC class translation factor GTPase superfamily. Classic translation factor GTPase family. EF-G/EF-2 subfamily.

It localises to the cytoplasm. Its function is as follows. Catalyzes the GTP-dependent ribosomal translocation step during translation elongation. During this step, the ribosome changes from the pre-translocational (PRE) to the post-translocational (POST) state as the newly formed A-site-bound peptidyl-tRNA and P-site-bound deacylated tRNA move to the P and E sites, respectively. Catalyzes the coordinated movement of the two tRNA molecules, the mRNA and conformational changes in the ribosome. The polypeptide is Elongation factor G (Christiangramia forsetii (strain DSM 17595 / CGMCC 1.15422 / KT0803) (Gramella forsetii)).